Consider the following 462-residue polypeptide: uncharacterized protein (462 aa).

2 consecutive transmembrane segments (helical) span residues 381–401 (WILG…FKGM) and 433–453 (LWIL…NLYI).

Its subcellular location is the cell membrane. This is an uncharacterized protein from Methanocaldococcus jannaschii (strain ATCC 43067 / DSM 2661 / JAL-1 / JCM 10045 / NBRC 100440) (Methanococcus jannaschii).